The sequence spans 152 residues: Proteolipid protein 2 (152 aa).

One can recognise an MARVEL domain in the interval 19 to 137; it reads FSRTRKGFLL…DAYITFPLRQ (119 aa). 3 helical membrane-spanning segments follow: residues 25–45, 48–68, and 85–105; these read GFLL…FSTS, GYSF…VVYM, and FFRT…VLVE. Asparagine 108 carries N-linked (GlcNAc...) asparagine glycosylation. Residues 112 to 132 form a helical membrane-spanning segment; it reads IAAGALGLCAAGLFGYDAYIT.

Its subcellular location is the membrane. In terms of biological role, may play a role in cell differentiation in the intestinal epithelium. The protein is Proteolipid protein 2 (PLP2) of Bos taurus (Bovine).